The following is an 851-amino-acid chain: Putative serine/threonine-protein kinase 019R (851 aa).

5 disordered regions span residues M1–K24, P61–P91, G104–G160, G190–S216, and S340–R400. A compositionally biased stretch (low complexity) spans A125–E141. Residues S196–S216 show a composition bias toward basic residues. Residues S340–S366 are compositionally biased toward low complexity. The Protein kinase domain occupies A456 to M851. ATP is bound by residues I462 to V470 and K485. The active-site Proton acceptor is the D608.

Belongs to the protein kinase superfamily. Ser/Thr protein kinase family.

The enzyme catalyses L-seryl-[protein] + ATP = O-phospho-L-seryl-[protein] + ADP + H(+). The catalysed reaction is L-threonyl-[protein] + ATP = O-phospho-L-threonyl-[protein] + ADP + H(+). The sequence is that of Putative serine/threonine-protein kinase 019R from Dryophytes versicolor (chameleon treefrog).